Reading from the N-terminus, the 125-residue chain is Oxytocin-neurophysin 1 (125 aa).

An N-terminal signal peptide occupies residues 1–19 (MACPSLACCLLGLLALTSA). A disulfide bridge connects residues Cys-20 and Cys-25. Gly-28 bears the Glycine amide mark. 7 cysteine pairs are disulfide-bonded: Cys-41/Cys-85, Cys-44/Cys-58, Cys-52/Cys-75, Cys-59/Cys-65, Cys-92/Cys-104, Cys-98/Cys-116, and Cys-105/Cys-110.

This sequence belongs to the vasopressin/oxytocin family. In terms of assembly, interacts with oxytocin receptor (Ki=1.5 nM). Interacts with vasopressin V1aR/AVPR1A (Ki=37 nM), V1bR/AVPR1B (Ki=222 nM), and V2R/AVPR2 receptors (Ki=823 nM).

Functionally, neurophysin 1 specifically binds oxytocin. In terms of biological role, oxytocin causes contraction of the smooth muscle of the uterus and of the mammary gland. Acts by binding to oxytocin receptor (OXTR). This chain is Oxytocin-neurophysin 1 (Oxt), found in Rattus norvegicus (Rat).